The sequence spans 381 residues: UDP-4-amino-4-deoxy-L-arabinose--oxoglutarate aminotransferase (381 aa).

Lys182 carries the post-translational modification N6-(pyridoxal phosphate)lysine.

Belongs to the DegT/DnrJ/EryC1 family. ArnB subfamily. As to quaternary structure, homodimer. Pyridoxal 5'-phosphate is required as a cofactor.

It catalyses the reaction UDP-4-amino-4-deoxy-beta-L-arabinose + 2-oxoglutarate = UDP-beta-L-threo-pentopyranos-4-ulose + L-glutamate. The protein operates within nucleotide-sugar biosynthesis; UDP-4-deoxy-4-formamido-beta-L-arabinose biosynthesis; UDP-4-deoxy-4-formamido-beta-L-arabinose from UDP-alpha-D-glucuronate: step 2/3. It functions in the pathway bacterial outer membrane biogenesis; lipopolysaccharide biosynthesis. Its function is as follows. Catalyzes the conversion of UDP-4-keto-arabinose (UDP-Ara4O) to UDP-4-amino-4-deoxy-L-arabinose (UDP-L-Ara4N). The modified arabinose is attached to lipid A and is required for resistance to polymyxin and cationic antimicrobial peptides. In Edwardsiella ictaluri (strain 93-146), this protein is UDP-4-amino-4-deoxy-L-arabinose--oxoglutarate aminotransferase.